The sequence spans 158 residues: Heavy metal-associated isoprenylated plant protein 23 (158 aa).

The 64-residue stretch at 31-94 (FQTVELKVRM…KAKATGKKAE (64 aa)) folds into the HMA domain. Positions 42 and 45 each coordinate a metal cation. Cysteine methyl ester is present on cysteine 155. Cysteine 155 is lipidated: S-farnesyl cysteine. Positions 156–158 (SIM) are cleaved as a propeptide — removed in mature form.

The protein belongs to the HIPP family. As to quaternary structure, interacts with ZHD11/HB29.

In terms of biological role, heavy-metal-binding protein. This chain is Heavy metal-associated isoprenylated plant protein 23, found in Arabidopsis thaliana (Mouse-ear cress).